Consider the following 212-residue polypeptide: Small ribosomal subunit protein uS2 (212 aa).

Residues 190–212 (LSPDAPEDQPAPVSEFETKVKMV) are disordered.

Belongs to the universal ribosomal protein uS2 family.

This chain is Small ribosomal subunit protein uS2, found in Ignicoccus hospitalis (strain KIN4/I / DSM 18386 / JCM 14125).